The sequence spans 269 residues: Microtubule-associated protein RP/EB family member 1 (269 aa).

Positions 14–116 (NLSRHDMLAW…FVQWFKKFFD (103 aa)) constitute a Calponin-homology (CH) domain. Residues 168-190 (RTAVSNKPPAQGISKKPATVGNG) are disordered. In terms of domain architecture, EB1 C-terminal spans 186–256 (TVGNGDDESA…LYATDEGFVI (71 aa)).

The protein belongs to the MAPRE family.

The protein resides in the cytoplasm. The protein localises to the cytoskeleton. It is found in the microtubule organizing center. Its subcellular location is the centrosome. It localises to the golgi apparatus. The protein resides in the spindle. The protein localises to the spindle pole. Plus-end tracking protein (+TIP) that binds to the plus-end of microtubules and regulates the dynamics of the microtubule cytoskeleton. Promotes cytoplasmic microtubule nucleation and elongation. Involved in mitotic spindle positioning by stabilizing microtubules and promoting dynamic connection between astral microtubules and the cortex during mitotic chromosome segregation. This chain is Microtubule-associated protein RP/EB family member 1 (mapre1), found in Xenopus tropicalis (Western clawed frog).